The sequence spans 323 residues: Ankyrin repeat and SOCS box protein 11 (323 aa).

ANK repeat units lie at residues 64 to 93 (ADRSPLHEAAAQGRLLALKTLIAQGVNVNL), 97 to 126 (NRVSSLHEACLGGHVACAKALLENGAHVNG), 130 to 159 (HGATPLFNACCSGSAACVNVLLEFGAKAQL), 162 to 191 (HLASPIHEAVKRGHRECMEILLANNVNIDH), 195 to 224 (QLGTPLYVACTYQRVDCVKKLLELGASVDH), and 227 to 256 (WLDTPLHAAARQSNVEVIHLLTDYGANLKR). Residues 273–323 (SVEQALLLREGPPALSQLCRLCVRKCLGRACHQAIHKLHLPEPLERFLLYQ) form the SOCS box domain.

This sequence belongs to the ankyrin SOCS box (ASB) family. Substrate-recognition component of the ECS(ASB11) complex, composed of ASB11, CUL5, ELOB, ELOC and RNF7/RBX2.

Its subcellular location is the endoplasmic reticulum. It participates in protein modification; protein ubiquitination. Substrate-recognition component of a cullin-5-RING E3 ubiquitin-protein ligase complex (ECS complex, also named CRL5 complex), which mediates the ubiquitination and subsequent proteasomal degradation of target proteins, such as BIK, DIRAS2 and RPN1. The ECS(ASB11) complex acts as a regulator of the endoplasmic reticulum unfolded protein response by mediating ubiquitination and degradation of BIK. The protein is Ankyrin repeat and SOCS box protein 11 of Homo sapiens (Human).